Reading from the N-terminus, the 384-residue chain is Chorismate synthase (384 aa).

2 residues coordinate NADP(+): arginine 40 and arginine 46. FMN contacts are provided by residues 127-129 (RTS), 247-248 (QA), alanine 292, 307-311 (KPIPT), and arginine 333.

The protein belongs to the chorismate synthase family. Homotetramer. The cofactor is FMNH2.

The enzyme catalyses 5-O-(1-carboxyvinyl)-3-phosphoshikimate = chorismate + phosphate. It functions in the pathway metabolic intermediate biosynthesis; chorismate biosynthesis; chorismate from D-erythrose 4-phosphate and phosphoenolpyruvate: step 7/7. Catalyzes the anti-1,4-elimination of the C-3 phosphate and the C-6 proR hydrogen from 5-enolpyruvylshikimate-3-phosphate (EPSP) to yield chorismate, which is the branch point compound that serves as the starting substrate for the three terminal pathways of aromatic amino acid biosynthesis. This reaction introduces a second double bond into the aromatic ring system. The chain is Chorismate synthase from Alkaliphilus oremlandii (strain OhILAs) (Clostridium oremlandii (strain OhILAs)).